The chain runs to 137 residues: Glutaredoxin-C9 (137 aa).

The Glutaredoxin domain maps to 32 to 136 (GERVRMVVEE…PILKEVGALW (105 aa)). A disulfide bridge links C52 with C55. The short motif at 134–137 (ALWL) is the Responsive for interaction with TGA factors element.

This sequence belongs to the glutaredoxin family. CC-type subfamily. As to quaternary structure, interacts with TGA2 and TGA6.

The protein resides in the cytoplasm. It is found in the nucleus. Has a glutathione-disulfide oxidoreductase activity in the presence of NADPH and glutathione reductase. Reduces low molecular weight disulfides and proteins. The polypeptide is Glutaredoxin-C9 (GRXC9) (Arabidopsis thaliana (Mouse-ear cress)).